Consider the following 652-residue polypeptide: DNA mismatch repair protein MutL (652 aa).

The protein belongs to the DNA mismatch repair MutL/HexB family.

In terms of biological role, this protein is involved in the repair of mismatches in DNA. It is required for dam-dependent methyl-directed DNA mismatch repair. May act as a 'molecular matchmaker', a protein that promotes the formation of a stable complex between two or more DNA-binding proteins in an ATP-dependent manner without itself being part of a final effector complex. The polypeptide is DNA mismatch repair protein MutL (Neorickettsia sennetsu (strain ATCC VR-367 / Miyayama) (Ehrlichia sennetsu)).